Consider the following 113-residue polypeptide: MHELSLCESVIETIMDNVRTHHFSQVRRVRLTVGRFAGVETEALRFSFDVVARGTLVEGAELELLEEPGAAWCFDCSETVPLMDRLDPCPRCGGTRLHPTAGTDVMIKDLEVI.

Position 2 (histidine 2) interacts with Ni(2+). The Zn(2+) site is built by cysteine 73, cysteine 76, cysteine 89, and cysteine 92.

Belongs to the HypA/HybF family.

In terms of biological role, involved in the maturation of [NiFe] hydrogenases. Required for nickel insertion into the metal center of the hydrogenase. In Beijerinckia indica subsp. indica (strain ATCC 9039 / DSM 1715 / NCIMB 8712), this protein is Hydrogenase maturation factor HypA.